A 66-amino-acid chain; its full sequence is Sodium channel neurotoxin MeuNaTxalpha-7 (66 aa).

Residues 2–64 (RDGYIADDKN…VPIKVSGKCN (63 aa)) form the LCN-type CS-alpha/beta domain. Cystine bridges form between C12/C63, C16/C36, C22/C46, and C26/C48. N64 is subject to Asparagine amide.

It belongs to the long (4 C-C) scorpion toxin superfamily. Sodium channel inhibitor family. Alpha subfamily. Expressed by the venom gland.

The protein resides in the secreted. In terms of biological role, alpha toxins bind voltage-independently at site-3 of sodium channels (Nav) and inhibit the inactivation of the activated channels, thereby blocking neuronal transmission. The polypeptide is Sodium channel neurotoxin MeuNaTxalpha-7 (Mesobuthus eupeus (Lesser Asian scorpion)).